A 281-amino-acid polypeptide reads, in one-letter code: Glycerol uptake facilitator protein (281 aa).

Residues 1–5 lie on the Cytoplasmic side of the membrane; the sequence is MSQTS. Residues 6 to 34 form a helical membrane-spanning segment; sequence TLKGQCIAEFLGTGLLIFFGVGCVAALKV. Over 35–39 the chain is Periplasmic; sequence AGASF. The chain crosses the membrane as a helical span at residues 40 to 60; the sequence is GQWEISVIWGLGVAMAIYLTA. Residues 61 to 63 lie on the Cytoplasmic side of the membrane; that stretch reads GVS. Residues 64-67 lie within the membrane without spanning it; the sequence is GAHL. An NPA 1 motif is present at residues 68-70; the sequence is NPA. Residues 68–78 constitute an intramembrane region (helical); that stretch reads NPAVTIALWLF. Over 79-84 the chain is Cytoplasmic; that stretch reads ACFDKR. Residues 85 to 108 traverse the membrane as a helical segment; sequence KVIPFIVSQVAGAFCAAALVYGLY. The Periplasmic segment spans residues 109 to 143; sequence YNLFFDFEQTHHIVRGSVESVDLAGTFSTYPNPHI. A helical membrane pass occupies residues 144-169; sequence NFVQAFAVEMVITAILMGLILALTDD. Residues 170 to 177 lie on the Cytoplasmic side of the membrane; that stretch reads GNGVPRGP. A helical transmembrane segment spans residues 178–194; it reads LAPLLIGLLIAVIGASM. At 195–198 the chain is on the periplasmic side; sequence GPLT. The stretch at 199–202 is an intramembrane region; it reads GFAM. The NPA 2 signature appears at 203–205; it reads NPA. The helical intramembrane region spans 203–216; sequence NPARDFGPKVFAWL. Topologically, residues 217–231 are periplasmic; that stretch reads AGWGNVAFTGGRDIP. Residues 232-254 form a helical membrane-spanning segment; the sequence is YFLVPLFSPIVGAIVGAFAYRKL. Over 255–281 the chain is Cytoplasmic; it reads IGRHLPCDICVVEEKETTTPSEQKASL.

The protein belongs to the MIP/aquaporin (TC 1.A.8) family. As to quaternary structure, homotetramer.

It localises to the cell inner membrane. It carries out the reaction glycerol(in) = glycerol(out). Mediates glycerol diffusion across the cytoplasmic membrane via a pore-type mechanism. The polypeptide is Glycerol uptake facilitator protein (glpF) (Shigella flexneri).